The chain runs to 260 residues: Tropinone reductase 2 (260 aa).

18 to 41 (SRGIGYGIVEELASLGASVYTCSR) contributes to the NADP(+) binding site. Ser146 is a binding site for substrate. The active-site Proton acceptor is Tyr159. 192-196 (IATSL) lines the NADP(+) pocket.

The protein belongs to the short-chain dehydrogenases/reductases (SDR) family. In terms of assembly, homodimer.

The catalysed reaction is pseudotropine + NADP(+) = tropinone + NADPH + H(+). It functions in the pathway alkaloid biosynthesis; tropane alkaloid biosynthesis. Functionally, catalyzes the stereospecific reduction of tropinone to pseudotropine. The polypeptide is Tropinone reductase 2 (TR2) (Datura stramonium (Jimsonweed)).